An 89-amino-acid polypeptide reads, in one-letter code: Putative regulatory protein Nther_1328 (89 aa).

This sequence belongs to the RemA family.

The polypeptide is Putative regulatory protein Nther_1328 (Natranaerobius thermophilus (strain ATCC BAA-1301 / DSM 18059 / JW/NM-WN-LF)).